Consider the following 517-residue polypeptide: Anthranilate--CoA ligase (517 aa).

AMP is bound at residue 161-172 (LQYTSGSTGAPK).

It belongs to the ATP-dependent AMP-binding enzyme family. As to quaternary structure, monomer.

The enzyme catalyses anthranilate + ATP + CoA = anthraniloyl-CoA + AMP + diphosphate. Functionally, catalyzes the formation of anthraniloyl-CoA, which is the priming step for entry into the Pseudomonas quinolone signal (PQS) biosynthetic pathway. Also active on a variety of aromatic substrates, including benzoate and chloro and fluoro derivatives of anthranilate. The chain is Anthranilate--CoA ligase (pqsA) from Pseudomonas aeruginosa (strain ATCC 15692 / DSM 22644 / CIP 104116 / JCM 14847 / LMG 12228 / 1C / PRS 101 / PAO1).